Reading from the N-terminus, the 98-residue chain is MPVVYVNIFLAFIVSLMGLLIYRSHLMSSLLCLEGMMLSLFVMLTVTVLNNHFTLANMAPIILLVFAACEAALGLSLLVMVSNTYGTDYVQNLNLLQC.

3 helical membrane-spanning segments follow: residues 1–21 (MPVVYVNIFLAFIVSLMGLLI), 29–49 (SLLCLEGMMLSLFVMLTVTVL), and 61–81 (IILLVFAACEAALGLSLLVMV).

This sequence belongs to the complex I subunit 4L family. Core subunit of respiratory chain NADH dehydrogenase (Complex I) which is composed of 45 different subunits.

It is found in the mitochondrion inner membrane. It carries out the reaction a ubiquinone + NADH + 5 H(+)(in) = a ubiquinol + NAD(+) + 4 H(+)(out). Core subunit of the mitochondrial membrane respiratory chain NADH dehydrogenase (Complex I) which catalyzes electron transfer from NADH through the respiratory chain, using ubiquinone as an electron acceptor. Part of the enzyme membrane arm which is embedded in the lipid bilayer and involved in proton translocation. The chain is NADH-ubiquinone oxidoreductase chain 4L (MT-ND4L) from Ursus americanus (American black bear).